Reading from the N-terminus, the 321-residue chain is Gap junction delta-2 protein (321 aa).

At 1-19 (MGEWTILERLLEAAVQQHS) the chain is on the cytoplasmic side. A helical membrane pass occupies residues 20-42 (TMIGRILLTVVVIFRILIVAIVG). At 43-75 (ETVYDDEQTMFVCNTLQPGCNQACYDRAFPISH) the chain is on the extracellular side. The chain crosses the membrane as a helical span at residues 76-98 (IRYWVFQIIMVCTPSLCFITYSV). The Cytoplasmic segment spans residues 99 to 197 (HQSAKQRERR…KLRRQEGISR (99 aa)). The disordered stretch occupies residues 120-141 (PAESIGGPGGTGGGGSGGSKRE). Positions 125-137 (GGPGGTGGGGSGG) are enriched in gly residues. Residues 198–220 (FYIIQVVFRNALEIGFLVGQYFL) form a helical membrane-spanning segment. The Extracellular segment spans residues 221–252 (YGFSVPGLYECNRYPCIKEVECYVSRPTEKTV). Residues 253 to 275 (FLVFMFAVSGICVVLNLAELNHL) form a helical membrane-spanning segment. Residues 276–321 (GWRKIKLAVRGAQAKRKSVYEIRNKDLPRVSVPNFGRTQSSDSAYV) lie on the Cytoplasmic side of the membrane.

It belongs to the connexin family. Delta-type subfamily. A connexon is composed of a hexamer of connexins. As to expression, highly expressed in neurons.

It is found in the cell membrane. The protein resides in the cell junction. It localises to the gap junction. In terms of biological role, one gap junction consists of a cluster of closely packed pairs of transmembrane channels, the connexons, through which materials of low MW diffuse from one cell to a neighboring cell. The polypeptide is Gap junction delta-2 protein (Gjd2) (Rattus norvegicus (Rat)).